Here is a 347-residue protein sequence, read N- to C-terminus: KIN17-like protein KLP (347 aa).

A Nuclear localization signal (NLS) motif is present at residues K222–R225.

This sequence belongs to the KIN17 family.

The protein resides in the cytoplasm. It localises to the nucleus. Its function is as follows. May act as repressor of root growth during copper excess and of hypocotyl growth in the dark. This chain is KIN17-like protein KLP, found in Arabidopsis thaliana (Mouse-ear cress).